Here is a 189-residue protein sequence, read N- to C-terminus: ComE operon protein 2 (189 aa).

The CMP/dCMP-type deaminase domain occupies 5-132 (SWNQYFMAQS…PYAQELFEQA (128 aa)). Position 70 (His-70) interacts with Zn(2+). Residue Glu-72 is the Proton donor of the active site. Cys-98 and Cys-101 together coordinate Zn(2+).

The protein belongs to the cytidine and deoxycytidylate deaminase family. It depends on Zn(2+) as a cofactor.

Functionally, dispensable for transformability. The polypeptide is ComE operon protein 2 (comEB) (Bacillus subtilis (strain 168)).